The following is a 403-amino-acid chain: Enoyl-[acyl-carrier-protein] reductase [NADH] (403 aa).

Residues 49 to 54, 75 to 76, 112 to 113, and 141 to 142 contribute to the NAD(+) site; these read GASSGY, FE, DA, and LA. Tyr-227 lines the substrate pocket. Tyr-237 functions as the Proton donor in the catalytic mechanism. NAD(+) contacts are provided by residues Lys-246 and 276–278; that span reads VVT.

It belongs to the TER reductase family. As to quaternary structure, monomer.

The catalysed reaction is a 2,3-saturated acyl-[ACP] + NAD(+) = a (2E)-enoyl-[ACP] + NADH + H(+). The protein operates within lipid metabolism; fatty acid biosynthesis. Functionally, involved in the final reduction of the elongation cycle of fatty acid synthesis (FAS II). Catalyzes the reduction of a carbon-carbon double bond in an enoyl moiety that is covalently linked to an acyl carrier protein (ACP). The protein is Enoyl-[acyl-carrier-protein] reductase [NADH] of Pseudomonas putida (strain GB-1).